An 834-amino-acid chain; its full sequence is Membrane-associated lipoprotein (834 aa).

The first 25 residues, 1–25, serve as a signal peptide directing secretion; sequence MKKNKLTTLALILPITILTPIVIAS. The N-palmitoyl cysteine moiety is linked to residue cysteine 26. A lipid anchor (S-diacylglycerol cysteine) is attached at cysteine 26. The 95-residue stretch at 143–237 folds into the Lipoprotein-associated type-17 domain; sequence RLKDTFDFKL…LLEVSGFKSN (95 aa).

It is found in the cell membrane. The sequence is that of Membrane-associated lipoprotein from Ureaplasma parvum serovar 3 (strain ATCC 700970).